Consider the following 156-residue polypeptide: ATP synthase subunit b (156 aa).

Residues 7–29 (LIGQSLTFIAFILFCMKYVWPQL) traverse the membrane as a helical segment.

This sequence belongs to the ATPase B chain family. As to quaternary structure, F-type ATPases have 2 components, F(1) - the catalytic core - and F(0) - the membrane proton channel. F(1) has five subunits: alpha(3), beta(3), gamma(1), delta(1), epsilon(1). F(0) has three main subunits: a(1), b(2) and c(10-14). The alpha and beta chains form an alternating ring which encloses part of the gamma chain. F(1) is attached to F(0) by a central stalk formed by the gamma and epsilon chains, while a peripheral stalk is formed by the delta and b chains.

It is found in the cell inner membrane. Functionally, f(1)F(0) ATP synthase produces ATP from ADP in the presence of a proton or sodium gradient. F-type ATPases consist of two structural domains, F(1) containing the extramembraneous catalytic core and F(0) containing the membrane proton channel, linked together by a central stalk and a peripheral stalk. During catalysis, ATP synthesis in the catalytic domain of F(1) is coupled via a rotary mechanism of the central stalk subunits to proton translocation. Its function is as follows. Component of the F(0) channel, it forms part of the peripheral stalk, linking F(1) to F(0). The chain is ATP synthase subunit b from Saccharophagus degradans (strain 2-40 / ATCC 43961 / DSM 17024).